Reading from the N-terminus, the 387-residue chain is Succinate--CoA ligase [ADP-forming] subunit beta (387 aa).

The region spanning 9-244 is the ATP-grasp domain; sequence KHILSKFGVN…YDEEIKEEIE (236 aa). ATP-binding positions include K46, 53 to 55, E99, C102, and E107; that span reads GRG. Mg(2+) contacts are provided by N199 and D213. Substrate-binding positions include N264 and 321-323; that span reads GIM.

This sequence belongs to the succinate/malate CoA ligase beta subunit family. In terms of assembly, heterotetramer of two alpha and two beta subunits. It depends on Mg(2+) as a cofactor.

The catalysed reaction is succinate + ATP + CoA = succinyl-CoA + ADP + phosphate. It catalyses the reaction GTP + succinate + CoA = succinyl-CoA + GDP + phosphate. It participates in carbohydrate metabolism; tricarboxylic acid cycle; succinate from succinyl-CoA (ligase route): step 1/1. In terms of biological role, succinyl-CoA synthetase functions in the citric acid cycle (TCA), coupling the hydrolysis of succinyl-CoA to the synthesis of either ATP or GTP and thus represents the only step of substrate-level phosphorylation in the TCA. The beta subunit provides nucleotide specificity of the enzyme and binds the substrate succinate, while the binding sites for coenzyme A and phosphate are found in the alpha subunit. This chain is Succinate--CoA ligase [ADP-forming] subunit beta, found in Ehrlichia chaffeensis (strain ATCC CRL-10679 / Arkansas).